A 225-amino-acid polypeptide reads, in one-letter code: MNATTAPLPYSAARLHELAHVLIANIRELAHAGWTPATSSNFSHRLDEQHAAITVSGRDKGRLVEEDIMVVDFDGLAVGRPLRPSAETLLHTQLYRRFPEICCVLHTHSPVQTIASRLYAGSDVIRLEGYELLKAFEGNTTHETAVEVPVFANTQDMQVLAAQVDALLDKQSVWGYLIEGHGLYAWGRNMAEARRHLEAFEFLLQCELELLKLRGTRQVVPVPHS.

Zn(2+) contacts are provided by His-106 and His-108.

Belongs to the aldolase class II family. MtnB subfamily. Zn(2+) is required as a cofactor.

It carries out the reaction 5-(methylsulfanyl)-D-ribulose 1-phosphate = 5-methylsulfanyl-2,3-dioxopentyl phosphate + H2O. It functions in the pathway amino-acid biosynthesis; L-methionine biosynthesis via salvage pathway; L-methionine from S-methyl-5-thio-alpha-D-ribose 1-phosphate: step 2/6. Catalyzes the dehydration of methylthioribulose-1-phosphate (MTRu-1-P) into 2,3-diketo-5-methylthiopentyl-1-phosphate (DK-MTP-1-P). The sequence is that of Methylthioribulose-1-phosphate dehydratase from Xanthomonas oryzae pv. oryzae (strain KACC10331 / KXO85).